The sequence spans 328 residues: MAKPAKRVAVTGAAGQIAYSLLFRIANGDLLGKDQPVILQLLDLPQAQAAVKGVVMELEDCAFPLLAGVVITDDPKVAFKDADVALLVGARPRSKGMERKDLLSANAEIFTVQGAALNEVASRDVKVLVVGNPANTNAYIAMKSAPDLPKKNFTAMLRLDHNRALSQLAAKTGKPVASIEKLAVWGNHSPTMYPDFRFATAEGESMLKLVNDDVWNRETFIPTVGKRGAAIIEARGLSSAASAANAAIDHVRDWVLGTNGKWVTMGIPSDGSYGIPEDIIYGVPVTCENGEYKRVEGLEIDAFSREKMDGTLAELLEERDGVAHLLKN.

Position 12–18 (12–18 (GAAGQIA)) interacts with NAD(+). Residues Arg93 and Arg99 each coordinate substrate. NAD(+)-binding positions include Asn106, Gln113, and 130–132 (VGN). 2 residues coordinate substrate: Asn132 and Arg163. Catalysis depends on His188, which acts as the Proton acceptor.

The protein belongs to the LDH/MDH superfamily. MDH type 2 family.

It catalyses the reaction (S)-malate + NAD(+) = oxaloacetate + NADH + H(+). In terms of biological role, catalyzes the reversible oxidation of malate to oxaloacetate. This chain is Malate dehydrogenase 2, found in Burkholderia vietnamiensis (strain G4 / LMG 22486) (Burkholderia cepacia (strain R1808)).